We begin with the raw amino-acid sequence, 1171 residues long: ATP-dependent helicase/deoxyribonuclease subunit B (1171 aa).

In terms of domain architecture, UvrD-like helicase ATP-binding spans 1–287; the sequence is MSLRFVIGRA…IPLMEQPRFH (287 aa). Residue 8–15 coordinates ATP; the sequence is GRAGSGKS. The 307-residue stretch at 281-587 folds into the UvrD-like helicase C-terminal domain; the sequence is MEQPRFHSPA…QFANIPPSLD (307 aa). [4Fe-4S] cluster is bound by residues Cys-805, Cys-1129, Cys-1132, and Cys-1138.

Belongs to the helicase family. AddB/RexB type 1 subfamily. Heterodimer of AddA and AddB. Requires Mg(2+) as cofactor. It depends on [4Fe-4S] cluster as a cofactor.

The heterodimer acts as both an ATP-dependent DNA helicase and an ATP-dependent, dual-direction single-stranded exonuclease. Recognizes the chi site generating a DNA molecule suitable for the initiation of homologous recombination. The AddB subunit has 5' -&gt; 3' nuclease activity but not helicase activity. This chain is ATP-dependent helicase/deoxyribonuclease subunit B, found in Bacillus cereus (strain G9842).